Reading from the N-terminus, the 475-residue chain is Threonine synthase (475 aa).

Lys-120 carries the post-translational modification N6-(pyridoxal phosphate)lysine.

The protein belongs to the threonine synthase family. The cofactor is pyridoxal 5'-phosphate.

The enzyme catalyses O-phospho-L-homoserine + H2O = L-threonine + phosphate. It participates in amino-acid biosynthesis; L-threonine biosynthesis; L-threonine from L-aspartate: step 5/5. Catalyzes the gamma-elimination of phosphate from L-phosphohomoserine and the beta-addition of water to produce L-threonine. The chain is Threonine synthase (thrC) from Methylobacillus glycogenes.